A 355-amino-acid chain; its full sequence is Chorismate synthase (355 aa).

Arg-48 contributes to the NADP(+) binding site. Residues 126-128, Gly-278, 293-297, and Arg-319 each bind FMN; these read RSS and KPIPS.

It belongs to the chorismate synthase family. As to quaternary structure, homotetramer. FMNH2 is required as a cofactor.

The enzyme catalyses 5-O-(1-carboxyvinyl)-3-phosphoshikimate = chorismate + phosphate. It participates in metabolic intermediate biosynthesis; chorismate biosynthesis; chorismate from D-erythrose 4-phosphate and phosphoenolpyruvate: step 7/7. Functionally, catalyzes the anti-1,4-elimination of the C-3 phosphate and the C-6 proR hydrogen from 5-enolpyruvylshikimate-3-phosphate (EPSP) to yield chorismate, which is the branch point compound that serves as the starting substrate for the three terminal pathways of aromatic amino acid biosynthesis. This reaction introduces a second double bond into the aromatic ring system. This chain is Chorismate synthase, found in Oleidesulfovibrio alaskensis (strain ATCC BAA-1058 / DSM 17464 / G20) (Desulfovibrio alaskensis).